Consider the following 139-residue polypeptide: D-ribose pyranase (139 aa).

Catalysis depends on His20, which acts as the Proton donor. Residues Asp28, His106, and 128-130 (YAN) each bind substrate.

Belongs to the RbsD / FucU family. RbsD subfamily. As to quaternary structure, homodecamer.

It localises to the cytoplasm. It catalyses the reaction beta-D-ribopyranose = beta-D-ribofuranose. The protein operates within carbohydrate metabolism; D-ribose degradation; D-ribose 5-phosphate from beta-D-ribopyranose: step 1/2. Functionally, catalyzes the interconversion of beta-pyran and beta-furan forms of D-ribose. This Escherichia coli O6:H1 (strain CFT073 / ATCC 700928 / UPEC) protein is D-ribose pyranase.